The chain runs to 493 residues: Amphoterin-induced protein 1 (493 aa).

A signal peptide spans 1-27 (MHPHRDPRGLWLLLPSLSLLLFEVARA). The 34-residue stretch at 28 to 61 (GRAVVSCPAACLCASNILSCSKQQLPNVPHSLPS) folds into the LRRNT domain. At 28 to 372 (GRAVVSCPAA…LHGHHDTLNT (345 aa)) the chain is on the extracellular side. 2 disulfides stabilise this stretch: Cys-34–Cys-40 and Cys-38–Cys-47. 6 LRR repeats span residues 62-83 (YTAL…WTPT), 87-108 (QLHS…AFSP), 111-132 (NLRY…LFSD), 135-156 (VLEV…AFDD), 159-179 (QLQK…ELVK), and 186-206 (KLTL…PDLQ). Asn-72 carries an N-linked (GlcNAc...) asparagine glycan. Positions 221–272 (NPLNCDCELYQLFSHWQYRQLSSVMDFQEDLYCMNSKKLHNVFNLSFLNCGE) constitute an LRRCT domain. 3 cysteine pairs are disulfide-bonded: Cys-225–Cys-253, Cys-227–Cys-270, and Cys-290–Cys-341. Residues Asn-264, Asn-315, Asn-349, and Asn-360 are each glycosylated (N-linked (GlcNAc...) asparagine). The Ig-like C2-type domain occupies 269 to 353 (NCGEYKERAW…MGETFNETLS (85 aa)). A helical membrane pass occupies residues 373–393 (AYTTLVGCILSVVLVLIYLYL). Over 394-493 (TPCRCWCRGV…SVFSDTPIVV (100 aa)) the chain is Cytoplasmic. The tract at residues 405-493 (KPSSHQGDSL…SVFSDTPIVV (89 aa)) is disordered. Positions 408-424 (SHQGDSLSSSMLSTTPN) are enriched in polar residues. The segment covering 431 to 442 (GDKDDGFDRRVA) has biased composition (basic and acidic residues). 2 positions are modified to phosphoserine: Ser-477 and Ser-481.

This sequence belongs to the immunoglobulin superfamily. AMIGO family. As to quaternary structure, homodimer, and heterodimer with AMIGO2 and AMIGO3. Interacts with KCNB1.

It localises to the cell membrane. The protein resides in the perikaryon. The protein localises to the cell projection. Its subcellular location is the dendrite. It is found in the axon. Functionally, promotes growth and fasciculation of neurites from cultured hippocampal neurons. May be involved in fasciculation as well as myelination of developing neural axons. May have a role in regeneration as well as neural plasticity in the adult nervous system. May mediate homophilic as well as heterophilic cell-cell interaction and contribute to signal transduction through its intracellular domain. Assembled with KCNB1 modulates the gating characteristics of the delayed rectifier voltage-dependent potassium channel KCNB1. The protein is Amphoterin-induced protein 1 of Homo sapiens (Human).